The sequence spans 128 residues: Large ribosomal subunit protein bL17 (128 aa).

The protein belongs to the bacterial ribosomal protein bL17 family. As to quaternary structure, part of the 50S ribosomal subunit. Contacts protein L32.

The chain is Large ribosomal subunit protein bL17 from Pseudomonas fluorescens (strain Pf0-1).